The chain runs to 572 residues: MGLLSYILLGFTHPSELRAMIGYKVWRDPLNDIKANPQASGWDRQRMRDCWGFLDLTSRSFAAVIKELKGELSRVICLFYLVLRALDTVEDDMTIPAQRKIPLLVNFYKYLEQPGWNFTESGPNEKDRQLLVEFDKVIAEYQLLDVGYKTVISDITAKMGAGMASYIELSAKGPLKVAMWKHFDLYCHFVAGLVGEGLSRLFSESKLERPWLGHQLELSNHMGLFLQKTNIIRDYAEDCEEGRYFWPQQCWGDDFAKFESQPDVAKGIIEIKPGHFRPADNELGQRSMYVLSSMLLDAMSHATHALDYLALLKEQSVFNFCAIPQVMAIATLELMFNNPDVFKKNVKIRKGVAVGLILRAVNPRDVAYTFLHYSRKMHARLSPADPNFTRWSVELARIEQWCETYYPSFIAAASEGKPTDIRANALRSWSESRRTQALILKQAKLNGSDASTLDAKSVLEAAQNSALDPRDLMTEDERAAQDKRDRDQMVKFFLIILVGMVTFMGIVALITWEIVWWWTMDTPDPLSVYVKHAYYLVKTQGWSTVKEVLRTTRLSFEHVWKHGLTSPPKLEL.

2 helical membrane-spanning segments follow: residues 316-336 (SVFNFCAIPQVMAIATLELMF) and 492-512 (FFLIILVGMVTFMGIVALITW).

Belongs to the phytoene/squalene synthase family. Monomer. Mg(2+) is required as a cofactor.

The protein localises to the endoplasmic reticulum membrane. It carries out the reaction 2 (2E,6E)-farnesyl diphosphate + NADPH + H(+) = squalene + 2 diphosphate + NADP(+). The catalysed reaction is 2 (2E,6E)-farnesyl diphosphate + NADH + H(+) = squalene + 2 diphosphate + NAD(+). Its pathway is terpene metabolism; lanosterol biosynthesis; lanosterol from farnesyl diphosphate: step 1/3. Catalyzes the condensation of 2 two farnesyl pyrophosphate moieties to form squalene. It is the first committed enzyme of the sterol biosynthesis pathway. Required for the biosynthesis of ergosterol. The polypeptide is Squalene synthase (ERG9) (Mycosarcoma maydis (Corn smut fungus)).